The chain runs to 459 residues: Argininosuccinate lyase (459 aa).

It belongs to the lyase 1 family. Argininosuccinate lyase subfamily.

Its subcellular location is the cytoplasm. It catalyses the reaction 2-(N(omega)-L-arginino)succinate = fumarate + L-arginine. It participates in amino-acid biosynthesis; L-arginine biosynthesis; L-arginine from L-ornithine and carbamoyl phosphate: step 3/3. The polypeptide is Argininosuccinate lyase (Sulfurihydrogenibium sp. (strain YO3AOP1)).